The primary structure comprises 65 residues: Large ribosomal subunit protein bL35 (65 aa).

Disordered regions lie at residues 1–23 (MPKI…GKVK) and 29–48 (GSHI…RQSH). A compositionally biased stretch (basic residues) spans 33–43 (LAKKSRKRKRD).

It belongs to the bacterial ribosomal protein bL35 family.

The polypeptide is Large ribosomal subunit protein bL35 (Desulfatibacillum aliphaticivorans).